The sequence spans 188 residues: Peroxynitrite isomerase (188 aa).

Residues 35 to 41 (GTWRGEG) carry the GXWXGXG motif. H178 contacts heme b.

It belongs to the nitrobindin family. In terms of assembly, homodimer. It depends on heme b as a cofactor.

The enzyme catalyses peroxynitrite = nitrate. It functions in the pathway nitrogen metabolism. Heme-binding protein able to scavenge peroxynitrite and to protect free L-tyrosine against peroxynitrite-mediated nitration, by acting as a peroxynitrite isomerase that converts peroxynitrite to nitrate. Therefore, this protein likely plays a role in peroxynitrite sensing and in the detoxification of reactive nitrogen and oxygen species (RNS and ROS, respectively). Is able to bind nitric oxide (NO) in vitro, but may act as a sensor of peroxynitrite levels in vivo. This is Peroxynitrite isomerase from Frankia casuarinae (strain DSM 45818 / CECT 9043 / HFP020203 / CcI3).